Consider the following 729-residue polypeptide: Serine/threonine-protein kinase TBK1 (729 aa).

A Protein kinase domain is found at 9 to 310 (WLLSDILGQG…ETSDVLHRMV (302 aa)). 15 to 23 (LGQGATANV) is an ATP binding site. K30 participates in a covalent cross-link: Glycyl lysine isopeptide (Lys-Gly) (interchain with G-Cter in ubiquitin). K38 lines the ATP pocket. The active-site Proton acceptor is the D135. S172 carries the post-translational modification Phosphoserine; by autocatalysis and IKKB. One can recognise a Ubiquitin-like domain in the interval 309–385 (MVIHVFSLQH…ENPIFVTSRE (77 aa)). A Glycyl lysine isopeptide (Lys-Gly) (interchain with G-Cter in ubiquitin) cross-link involves residue K401. 2 coiled-coil regions span residues 407–657 (DLDG…LQET) and 658–713 (LPQK…ILER). Residues 621–729 (RKMLHLRKQL…DGGLRNVDCL (109 aa)) are interaction with AZI2, TANK and TBKBP1. Residue K670 forms a Glycyl lysine isopeptide (Lys-Gly) (interchain with G-Cter in ubiquitin) linkage. S716 is modified (phosphoserine).

This sequence belongs to the protein kinase superfamily. Ser/Thr protein kinase family. I-kappa-B kinase subfamily. In terms of assembly, homodimer. Interacts with DDX3X, TIRAP and TRAF2. Part of a ternary complex consisting of TANK, TRAF2 and TBK1. Interacts with AZI2, TANK and TBKBP1; these interactions are mutually exclusive and mediate TBK1 activation. Interacts with GSK3B; this interaction promotes TBK1 self-association and autophosphorylation. Interacts with SIKE1; SIKE1 is associated with TBK1 under physiological condition and dissociated from TBK1 upon viral infection or TLR3 stimulation. Interacts with IRF3, leading to IRF3 phosphorylation. Interacts with RIGI. Interacts with CYLD. Interacts with OPTN and TRAF3. Interacts with SRC. Interacts with the exocyst complex subunit SEC5/EXOC2; this interaction is sufficient to trigger TBK1 activity. Interacts with STING1, leading to STING1 phosphorylation. Interacts with IFIT3 (via N-terminus). Interacts with MAVS; interaction only takes place in the presence of IFIT3 and leads to MAVS phosphorylation. Interacts (via protein kinase domain) with TTLL12 (via TTL domain); the interaction prevents MAVS binding to TBK1. Interacts with TICAM1; this interaction is enhanced in the presence of WDFY1 and leads to TICAM1 phosphorylation. Interacts with TRIM26. Interacts with TRIM23. Interacts with TTC4 and IKBKE. Interacts with HNRNPA2B1. Interacts with DDX3X. Interacts with TRIM14. Interacts with CEP170; efficient complex formation may be dependent on the presence of CCDC61. Interacts with TRAF3IP3. Interacts with HSP90AA1; the interaction mediates TBK1 association with TOMM70. Interacts with TAX1BP1. Interacts with kinase IKBKB; the complex interacts with STAT1, leading to phosphorylation of STAT1 on 'Thr-748' by IKBKB. Interacts with ICOS; this interaction is critical for the maturation of T follicular regulatory cells. Interacts with RNF144B; this interaction prevents TBK1 phosphorylation and subsequent activation. Interacts with ASB8; this interaction promotes TBK1 proteasomal degradation. In terms of processing, autophosphorylation at Ser-172 activates the kinase, and is an essential step for virus-triggered signaling. Phosphorylated by IKBKB/IKKB at Ser-172. Phosphorylation requires homodimerization and ubiquitination at Lys-30 and Lys-401. Dephosphorylated at Ser-172 by PPM1B and this negatively regulates its role in mediating antiviral response. Post-translationally, 'Lys-63'-linked polyubiquitination by MIB1 after RNA virus infection, or by NRDP1 after LPS stimulation at Lys-30 and Lys-401, participates in kinase activation. 'Lys-48'-linked polyubiquitination at Lys-670 by DTX4 leads to proteasomal degradation. 'Lys-48'-linked polyubiquitination by TRAIP also leads to proteasomal degradation. 'Lys-48'-linked polyubiquitination by TRAF7; leading to proteasomal degradation. 'Lys-63'-linked polyubiquitination by RNF128 at Lys-30 and Lys-401 leads to the activation of antiviral responses. 'Lys-48'-linked polyubiquitination after 'lys-33'-linked deubiquitination by USP38 promotes TBK1 degradation.

The protein resides in the cytoplasm. It carries out the reaction L-seryl-[protein] + ATP = O-phospho-L-seryl-[protein] + ADP + H(+). It catalyses the reaction L-threonyl-[protein] + ATP = O-phospho-L-threonyl-[protein] + ADP + H(+). Kinase activity is inhibited competitively by amlexanox. In terms of biological role, serine/threonine kinase that plays an essential role in regulating inflammatory responses to foreign agents. Following activation of toll-like receptors by viral or bacterial components, associates with TRAF3 and TANK and phosphorylates interferon regulatory factors (IRFs) IRF3 and IRF7 as well as DDX3X. This activity allows subsequent homodimerization and nuclear translocation of the IRFs leading to transcriptional activation of pro-inflammatory and antiviral genes including IFNA and IFNB. In order to establish such an antiviral state, TBK1 form several different complexes whose composition depends on the type of cell and cellular stimuli. Thus, several scaffolding molecules including FADD, TRADD, MAVS, AZI2, TANK or TBKBP1/SINTBAD can be recruited to the TBK1-containing-complexes. Plays a key role in IRF3 activation: acts by first phosphorylating innate adapter proteins MAVS, STING1 and TICAM1 on their pLxIS motif, leading to recruitment of IRF3, thereby licensing IRF3 for phosphorylation by TBK1. Under particular conditions, functions as a NF-kappa-B effector by phosphorylating NF-kappa-B inhibitor alpha/NFKBIA, IKBKB or RELA to translocate NF-Kappa-B to the nucleus. Restricts bacterial proliferation by phosphorylating the autophagy receptor OPTN/Optineurin on 'Ser-177', thus enhancing LC3 binding affinity and antibacterial autophagy. Phosphorylates SMCR8 component of the C9orf72-SMCR8 complex, promoting autophagosome maturation. Phosphorylates ATG8 proteins MAP1LC3C and GABARAPL2, thereby preventing their delipidation and premature removal from nascent autophagosomes. Seems to play a role in energy balance regulation by sustaining a state of chronic, low-grade inflammation in obesity, which leads to a negative impact on insulin sensitivity. Acts both as a positive and negative regulator of the mTORC1 complex, depending on the context: activates mTORC1 in response to growth factors by catalyzing phosphorylation of MTOR, while it limits the mTORC1 complex by promoting phosphorylation of RPTOR. Acts as a positive regulator of the mTORC2 complex by mediating phosphorylation of MTOR, leading to increased phosphorylation and activation of AKT1. Phosphorylates and activates AKT1. Involved in the regulation of TNF-induced RIPK1-mediated cell death, probably acting via CYLD phosphorylation that in turn controls RIPK1 ubiquitination status. Also participates in the differentiation of T follicular regulatory cells together with the receptor ICOS. This is Serine/threonine-protein kinase TBK1 from Mus musculus (Mouse).